The sequence spans 41 residues: Large ribosomal subunit protein bL36 (41 aa).

Belongs to the bacterial ribosomal protein bL36 family.

The chain is Large ribosomal subunit protein bL36 from Bartonella henselae (strain ATCC 49882 / DSM 28221 / CCUG 30454 / Houston 1) (Rochalimaea henselae).